We begin with the raw amino-acid sequence, 271 residues long: Mannosyl-3-phosphoglycerate phosphatase (271 aa).

Aspartate 13 functions as the Nucleophile in the catalytic mechanism. The Mg(2+) site is built by aspartate 13, aspartate 15, and aspartate 214.

It belongs to the HAD-like hydrolase superfamily. MPGP family. The cofactor is Mg(2+).

The protein resides in the cytoplasm. It catalyses the reaction 2-O-(alpha-D-mannosyl)-3-phosphoglycerate + H2O = (2R)-2-O-(alpha-D-mannosyl)-glycerate + phosphate. The polypeptide is Mannosyl-3-phosphoglycerate phosphatase (yedP) (Shigella boydii serotype 4 (strain Sb227)).